A 111-amino-acid chain; its full sequence is Photosystem II reaction center Psb28 protein (111 aa).

It belongs to the Psb28 family. In terms of assembly, part of the photosystem II complex.

The protein localises to the cellular thylakoid membrane. This Crocosphaera subtropica (strain ATCC 51142 / BH68) (Cyanothece sp. (strain ATCC 51142)) protein is Photosystem II reaction center Psb28 protein.